The chain runs to 783 residues: BMP/retinoic acid-inducible neural-specific protein 2 (783 aa).

An N-terminal signal peptide occupies residues Met-1–Ala-33. In terms of domain architecture, MACPF spans Arg-85–Thr-281. N-linked (GlcNAc...) asparagine glycans are attached at residues Asn-185, Asn-354, Asn-473, Asn-579, Asn-626, and Asn-658.

This sequence belongs to the BRINP family. As to expression, weakly expressed in embryonic stem (ES) cells. Strongly expressed in ES-derived neural stem cells (NSCs).

Its subcellular location is the secreted. Functionally, inhibits neuronal cell proliferation by negative regulation of the cell cycle transition. The protein is BMP/retinoic acid-inducible neural-specific protein 2 (Brinp2) of Mus musculus (Mouse).